A 354-amino-acid polypeptide reads, in one-letter code: Rhodopsin (354 aa).

The Extracellular portion of the chain corresponds to 1–36 (MNGTEGENFYVPMSNKTGVVRSPFDYPQYYLGEPWM). 2 N-linked (GlcNAc...) asparagine glycosylation sites follow: Asn-2 and Asn-15. The helical transmembrane segment at 37 to 61 (FSALAAYMFFLILTGLPVNFLTLFV) threads the bilayer. Over 62-73 (TIQHKKLRQPLN) the chain is Cytoplasmic. Residues 74 to 96 (YILLNLAVSDLFMVFGGFTTTII) traverse the membrane as a helical segment. Residues 97 to 110 (TSMNGYFIFGPAGC) lie on the Extracellular side of the membrane. Cys-110 and Cys-187 are joined by a disulfide. The helical transmembrane segment at 111–133 (NFEGFFATLGGEVGLWCLVVLAI) threads the bilayer. A 'Ionic lock' involved in activated form stabilization motif is present at residues 134–136 (ERY). Residues 134-152 (ERYMVVCKPMANFRFGSQH) are Cytoplasmic-facing. A helical transmembrane segment spans residues 153 to 173 (AIIGVVFTWIMALSCAGPPLV). Over 174–202 (GWSRYIPEGLQCSCGVDYYTMKPEVNNES) the chain is Extracellular. Residues 203–224 (FVIYMFVVHFTIPLIVIFFCYG) form a helical membrane-spanning segment. Residues 225–252 (RLVCTVKEAAAQQQESESTQRAEREVTR) are Cytoplasmic-facing. The helical transmembrane segment at 253 to 274 (MVIIMVVAFLICWVPYASVAFY) threads the bilayer. At 275-286 (IFINQGCDFTPF) the chain is on the extracellular side. A helical transmembrane segment spans residues 287–308 (FMTVPAFFAKSSAVYNPLIYIL). Lys-296 is subject to N6-(retinylidene)lysine. The Cytoplasmic portion of the chain corresponds to 309-354 (MNKQFRNCMITTICLGKNPFEEEESTSASASKTEASSVSSSQVAPA). Cys-322 carries the S-palmitoyl cysteine lipid modification. Positions 333–354 (STSASASKTEASSVSSSQVAPA) are disordered. Residues 334-354 (TSASASKTEASSVSSSQVAPA) show a composition bias toward low complexity.

The protein belongs to the G-protein coupled receptor 1 family. Opsin subfamily. Phosphorylated on some or all of the serine and threonine residues present in the C-terminal region. Post-translationally, contains one covalently linked retinal chromophore.

Its subcellular location is the membrane. The protein resides in the cell projection. It localises to the cilium. It is found in the photoreceptor outer segment. Photoreceptor required for image-forming vision at low light intensity. While most salt water fish species use retinal as chromophore, most freshwater fish use 3-dehydroretinal, or a mixture of retinal and 3-dehydroretinal. Light-induced isomerization of 11-cis to all-trans retinal triggers a conformational change that activates signaling via G-proteins. Subsequent receptor phosphorylation mediates displacement of the bound G-protein alpha subunit by arrestin and terminates signaling. This chain is Rhodopsin (rho), found in Leucoraja erinaceus (Little skate).